We begin with the raw amino-acid sequence, 621 residues long: tRNA uridine 5-carboxymethylaminomethyl modification enzyme MnmG (621 aa).

11 to 16 (GAGHAG) provides a ligand contact to FAD. Residue 271 to 285 (GPRYCPSVEDKINRF) coordinates NAD(+).

Belongs to the MnmG family. As to quaternary structure, homodimer. Heterotetramer of two MnmE and two MnmG subunits. FAD serves as cofactor.

The protein localises to the cytoplasm. In terms of biological role, NAD-binding protein involved in the addition of a carboxymethylaminomethyl (cmnm) group at the wobble position (U34) of certain tRNAs, forming tRNA-cmnm(5)s(2)U34. This chain is tRNA uridine 5-carboxymethylaminomethyl modification enzyme MnmG, found in Cytophaga hutchinsonii (strain ATCC 33406 / DSM 1761 / CIP 103989 / NBRC 15051 / NCIMB 9469 / D465).